The primary structure comprises 260 residues: Pyridoxine 5'-phosphate synthase (260 aa).

Position 6 (Asn-6) interacts with 3-amino-2-oxopropyl phosphate. 8–9 contributes to the 1-deoxy-D-xylulose 5-phosphate binding site; the sequence is DH. A 3-amino-2-oxopropyl phosphate-binding site is contributed by Arg-17. Catalysis depends on His-42, which acts as the Proton acceptor. Positions 44 and 49 each coordinate 1-deoxy-D-xylulose 5-phosphate. Glu-69 acts as the Proton acceptor in catalysis. Thr-99 serves as a coordination point for 1-deoxy-D-xylulose 5-phosphate. His-213 (proton donor) is an active-site residue. Residues Gly-214 and 235–236 contribute to the 3-amino-2-oxopropyl phosphate site; that span reads GQ.

It belongs to the PNP synthase family. Homooctamer; tetramer of dimers.

The protein localises to the cytoplasm. It catalyses the reaction 3-amino-2-oxopropyl phosphate + 1-deoxy-D-xylulose 5-phosphate = pyridoxine 5'-phosphate + phosphate + 2 H2O + H(+). Its pathway is cofactor biosynthesis; pyridoxine 5'-phosphate biosynthesis; pyridoxine 5'-phosphate from D-erythrose 4-phosphate: step 5/5. Its function is as follows. Catalyzes the complicated ring closure reaction between the two acyclic compounds 1-deoxy-D-xylulose-5-phosphate (DXP) and 3-amino-2-oxopropyl phosphate (1-amino-acetone-3-phosphate or AAP) to form pyridoxine 5'-phosphate (PNP) and inorganic phosphate. This chain is Pyridoxine 5'-phosphate synthase, found in Sulfurimonas denitrificans (strain ATCC 33889 / DSM 1251) (Thiomicrospira denitrificans (strain ATCC 33889 / DSM 1251)).